A 407-amino-acid chain; its full sequence is tRNA N6-adenosine threonylcarbamoyltransferase, mitochondrial (407 aa).

Residues 1-30 (MISIKGTGRFLLDNYRIWQRRAFNRPIQLR) constitute a mitochondrion transit peptide. A divalent metal cation is bound by residues His-145 and His-149. Substrate contacts are provided by residues 170–174 (LVSGG), Asp-203, Ala-217, Glu-221, 328–329 (SN), and Ser-360. Asp-361 contacts a divalent metal cation.

This sequence belongs to the KAE1 / TsaD family. As to quaternary structure, homodimer. The cofactor is a divalent metal cation.

Its subcellular location is the mitochondrion. It carries out the reaction L-threonylcarbamoyladenylate + adenosine(37) in tRNA = N(6)-L-threonylcarbamoyladenosine(37) in tRNA + AMP + H(+). In terms of biological role, required for the formation of a threonylcarbamoyl group on adenosine at position 37 (t(6)A37) in mitochondrial tRNAs that read codons beginning with adenine. Probably involved in the transfer of the threonylcarbamoyl moiety of threonylcarbamoyl-AMP (TC-AMP) to the N6 group of A37. Involved in mitochondrial genome maintenance. This Saccharomyces cerevisiae (strain ATCC 204508 / S288c) (Baker's yeast) protein is tRNA N6-adenosine threonylcarbamoyltransferase, mitochondrial (QRI7).